We begin with the raw amino-acid sequence, 242 residues long: Probable transcriptional regulatory protein Csac_0964 (242 aa).

Residues 1–20 (MSGHSKWANIRHKKEKTDAQ) are disordered.

It belongs to the TACO1 family.

The protein localises to the cytoplasm. This is Probable transcriptional regulatory protein Csac_0964 from Caldicellulosiruptor saccharolyticus (strain ATCC 43494 / DSM 8903 / Tp8T 6331).